The sequence spans 105 residues: Ketoisovalerate oxidoreductase subunit VorD (105 aa).

4Fe-4S ferredoxin-type domains follow at residues 44–73 (FKPV…IKPD) and 74–103 (GYVA…MIKE). Positions 53, 56, 59, 63, 83, 86, 89, and 93 each coordinate [4Fe-4S] cluster.

Heterotetramer of one alpha, one beta, one delta and one gamma chain. It depends on [4Fe-4S] cluster as a cofactor.

The enzyme catalyses 3-methyl-2-oxobutanoate + 2 oxidized [2Fe-2S]-[ferredoxin] + CoA = 2-methylpropanoyl-CoA + 2 reduced [2Fe-2S]-[ferredoxin] + CO2 + H(+). This is Ketoisovalerate oxidoreductase subunit VorD (vorD) from Pyrococcus furiosus (strain ATCC 43587 / DSM 3638 / JCM 8422 / Vc1).